The sequence spans 1128 residues: DNA-directed RNA polymerase subunit Rpo2 (1128 aa).

DsDNA-binding positions include Lys178, 181 to 182 (SN), Lys206, 435 to 439 (RGQPN), and 1027 to 1032 (RFGEME). Residues Cys1061, Cys1064, Cys1079, and His1082 each contribute to the Zn(2+) site.

The protein belongs to the RNA polymerase beta chain family. As to quaternary structure, part of the 13-subunit RNA polymerase complex. Requires Zn(2+) as cofactor.

The protein resides in the cytoplasm. It carries out the reaction RNA(n) + a ribonucleoside 5'-triphosphate = RNA(n+1) + diphosphate. Its function is as follows. DNA-dependent RNA polymerase (RNAP) catalyzes the transcription of DNA into RNA using the four ribonucleoside triphosphates as substrates. This subunit is involved in DNA promoter recognition. This chain is DNA-directed RNA polymerase subunit Rpo2, found in Saccharolobus shibatae (strain ATCC 51178 / DSM 5389 / JCM 8931 / NBRC 15437 / B12) (Sulfolobus shibatae).